The primary structure comprises 242 residues: ATP-dependent dethiobiotin synthetase BioD 1 (242 aa).

12 to 17 is an ATP binding site; it reads NVGKTT. Threonine 16 is a Mg(2+) binding site. The active site involves lysine 37. Aspartate 66 serves as a coordination point for ATP. Mg(2+)-binding residues include aspartate 66 and glutamate 124. Residues 184 to 185, 213 to 215, and glutamate 220 contribute to the ATP site; these read NR and PYL.

The protein belongs to the dethiobiotin synthetase family. In terms of assembly, homodimer. The cofactor is Mg(2+).

The protein localises to the cytoplasm. The enzyme catalyses (7R,8S)-7,8-diammoniononanoate + CO2 + ATP = (4R,5S)-dethiobiotin + ADP + phosphate + 3 H(+). Its pathway is cofactor biosynthesis; biotin biosynthesis; biotin from 7,8-diaminononanoate: step 1/2. Catalyzes a mechanistically unusual reaction, the ATP-dependent insertion of CO2 between the N7 and N8 nitrogen atoms of 7,8-diaminopelargonic acid (DAPA, also called 7,8-diammoniononanoate) to form a ureido ring. The chain is ATP-dependent dethiobiotin synthetase BioD 1 from Haemophilus influenzae (strain ATCC 51907 / DSM 11121 / KW20 / Rd).